A 363-amino-acid chain; its full sequence is Class I histocompatibility antigen, Gogo-B*0201 alpha chain (363 aa).

The first 24 residues, 1–24 (MQVTAPRTLLLLLSAALALTETWA), serve as a signal peptide directing secretion. The interval 25-114 (GSHSMRYFHT…LRGYYNQSED (90 aa)) is alpha-1. The Extracellular portion of the chain corresponds to 25-308 (GSHSMRYFHT…EPSSQSTIPI (284 aa)). Residue Asn110 is glycosylated (N-linked (GlcNAc...) asparagine). The alpha-2 stretch occupies residues 115-206 (GSHTIQRMYG…ENGKETLQRA (92 aa)). 2 cysteine pairs are disulfide-bonded: Cys125–Cys188 and Cys227–Cys283. The alpha-3 stretch occupies residues 207-298 (DPPKTHVTHH…GLPEPLTLRW (92 aa)). In terms of domain architecture, Ig-like C1-type spans 209–297 (PKTHVTHHPI…EGLPEPLTLR (89 aa)). The segment at 299–308 (EPSSQSTIPI) is connecting peptide. The helical transmembrane segment at 309-333 (VGIVAGLAVLVVTVAVVAVVAAVMC) threads the bilayer. The Cytoplasmic segment spans residues 334 to 363 (RRKSSGGKGGSYSQAASSDSAQGSDVSLTA). Residues 336–363 (KSSGGKGGSYSQAASSDSAQGSDVSLTA) are disordered. The segment covering 344 to 363 (SYSQAASSDSAQGSDVSLTA) has biased composition (low complexity).

It belongs to the MHC class I family. In terms of assembly, heterodimer of an alpha chain and a beta chain (beta-2-microglobulin).

The protein resides in the membrane. Functionally, involved in the presentation of foreign antigens to the immune system. The polypeptide is Class I histocompatibility antigen, Gogo-B*0201 alpha chain (Gorilla gorilla gorilla (Western lowland gorilla)).